Here is a 296-residue protein sequence, read N- to C-terminus: NAD kinase (296 aa).

The active-site Proton acceptor is Asp72. NAD(+)-binding positions include Asp72 to Gly73, Asn146 to Asp147, Arg157, Lys174, Asp176, Thr187 to Ser192, and Gln247.

It belongs to the NAD kinase family. It depends on a divalent metal cation as a cofactor.

The protein resides in the cytoplasm. It carries out the reaction NAD(+) + ATP = ADP + NADP(+) + H(+). Its function is as follows. Involved in the regulation of the intracellular balance of NAD and NADP, and is a key enzyme in the biosynthesis of NADP. Catalyzes specifically the phosphorylation on 2'-hydroxyl of the adenosine moiety of NAD to yield NADP. In Pseudomonas syringae pv. syringae (strain B728a), this protein is NAD kinase.